We begin with the raw amino-acid sequence, 218 residues long: Large ribosomal subunit protein uL3 (218 aa).

This sequence belongs to the universal ribosomal protein uL3 family. In terms of assembly, part of the 50S ribosomal subunit. Forms a cluster with proteins L14 and L19.

One of the primary rRNA binding proteins, it binds directly near the 3'-end of the 23S rRNA, where it nucleates assembly of the 50S subunit. The protein is Large ribosomal subunit protein uL3 of Corynebacterium aurimucosum (strain ATCC 700975 / DSM 44827 / CIP 107346 / CN-1) (Corynebacterium nigricans).